A 515-amino-acid chain; its full sequence is ATP synthase subunit alpha (515 aa).

An ATP-binding site is contributed by 171 to 178; it reads GDRQTGKT.

Belongs to the ATPase alpha/beta chains family. As to quaternary structure, F-type ATPases have 2 components, CF(1) - the catalytic core - and CF(0) - the membrane proton channel. CF(1) has five subunits: alpha(3), beta(3), gamma(1), delta(1), epsilon(1). CF(0) has three main subunits: a(1), b(2) and c(9-12). The alpha and beta chains form an alternating ring which encloses part of the gamma chain. CF(1) is attached to CF(0) by a central stalk formed by the gamma and epsilon chains, while a peripheral stalk is formed by the delta and b chains.

The protein localises to the cell inner membrane. It catalyses the reaction ATP + H2O + 4 H(+)(in) = ADP + phosphate + 5 H(+)(out). Produces ATP from ADP in the presence of a proton gradient across the membrane. The alpha chain is a regulatory subunit. In Coxiella burnetii (strain CbuK_Q154) (Coxiella burnetii (strain Q154)), this protein is ATP synthase subunit alpha.